We begin with the raw amino-acid sequence, 211 residues long: Large ribosomal subunit protein bL25 (211 aa).

Residues 1–18 (MAKTHEIKAERRADEGKG) are compositionally biased toward basic and acidic residues. A disordered region spans residues 1 to 20 (MAKTHEIKAERRADEGKGAS).

The protein belongs to the bacterial ribosomal protein bL25 family. CTC subfamily. In terms of assembly, part of the 50S ribosomal subunit; part of the 5S rRNA/L5/L18/L25 subcomplex. Contacts the 5S rRNA. Binds to the 5S rRNA independently of L5 and L18.

Its function is as follows. This is one of the proteins that binds to the 5S RNA in the ribosome where it forms part of the central protuberance. This Xanthomonas oryzae pv. oryzae (strain MAFF 311018) protein is Large ribosomal subunit protein bL25.